A 716-amino-acid chain; its full sequence is Fatty acid oxidation complex subunit alpha (716 aa).

An enoyl-CoA hydratase/isomerase region spans residues 1–189 (MIYQSPTIQV…KVGAVDAVVA (189 aa)). Asp-296 lines the substrate pocket. The interval 311–716 (KEVKNAAVLG…ATNNGSYYQA (406 aa)) is 3-hydroxyacyl-CoA dehydrogenase. NAD(+) contacts are provided by residues Met-324, Asp-343, 400-402 (VVE), Lys-407, and Ser-429. The active-site For 3-hydroxyacyl-CoA dehydrogenase activity is the His-450. Asn-453 contributes to the NAD(+) binding site. Substrate is bound by residues Asn-500 and Tyr-660.

This sequence in the N-terminal section; belongs to the enoyl-CoA hydratase/isomerase family. The protein in the C-terminal section; belongs to the 3-hydroxyacyl-CoA dehydrogenase family. In terms of assembly, heterotetramer of two alpha chains (FadB) and two beta chains (FadA).

The enzyme catalyses a (3S)-3-hydroxyacyl-CoA + NAD(+) = a 3-oxoacyl-CoA + NADH + H(+). It carries out the reaction a (3S)-3-hydroxyacyl-CoA = a (2E)-enoyl-CoA + H2O. The catalysed reaction is a 4-saturated-(3S)-3-hydroxyacyl-CoA = a (3E)-enoyl-CoA + H2O. It catalyses the reaction (3S)-3-hydroxybutanoyl-CoA = (3R)-3-hydroxybutanoyl-CoA. The enzyme catalyses a (3Z)-enoyl-CoA = a 4-saturated (2E)-enoyl-CoA. It carries out the reaction a (3E)-enoyl-CoA = a 4-saturated (2E)-enoyl-CoA. The protein operates within lipid metabolism; fatty acid beta-oxidation. Involved in the aerobic and anaerobic degradation of long-chain fatty acids via beta-oxidation cycle. Catalyzes the formation of 3-oxoacyl-CoA from enoyl-CoA via L-3-hydroxyacyl-CoA. It can also use D-3-hydroxyacyl-CoA and cis-3-enoyl-CoA as substrate. The protein is Fatty acid oxidation complex subunit alpha of Shewanella putrefaciens (strain CN-32 / ATCC BAA-453).